We begin with the raw amino-acid sequence, 1037 residues long: Protein brain tumor (1037 aa).

2 disordered regions span residues 29-63 (SDSP…SRSE) and 159-178 (SNSS…SPPR). Composition is skewed to polar residues over residues 31–42 (SPLTLSGSSPPA) and 54–63 (GGSSVKSRSE). The segment covering 159-175 (SNSSSNSSSSNTSANGS) has biased composition (low complexity). Residues 174-222 (GSPPRCTACKSKCSDAVAKCFECQSYLCANCVTAHEFMHCFNGHNVCLI) form a B box-type 1; atypical zinc finger. Residues Cys179, Cys182, Cys204, His208, Cys328, His331, Cys351, and His356 each coordinate Zn(2+). A B box-type 2 zinc finger spans residues 323–366 (QRQLFCPRHKQELLKFSCRTCCILVCKECIVLEHSTGLHELENV). Over residues 543-554 (GPTGMSLTSNGH) the composition is skewed to polar residues. The interval 543 to 606 (GPTGMSLTSN…TAHHQQLQAQ (64 aa)) is disordered. Residues 565–577 (QSASNSSASSAGS) are compositionally biased toward low complexity. The segment covering 579–598 (HHGHHQQSHHHGHHNHHQTA) has biased composition (basic residues). 5 NHL repeats span residues 767–810 (HCKF…FDKE), 814–859 (KFQF…YNQY), 860–901 (GQFV…FDQN), 902–944 (GNVL…FNYE), and 945–988 (GQYL…FTQD).

Interacts with nanos (nos) and pum. Acts via the formation of a quaternary complex composed of pum, nanos, brat and the 3'-UTR mRNA of hb. Not recruited by nanos and pum to cyclin B 3'-UTR mRNA. Might interact with mira; the interaction seems to be important for brat localization during mitosis. Interacts with Ago1. Expressed during embryogenesis, mainly in nervous tissues. Expressed in the embryonic central and peripheral nervous systems including the embryonic brain. In third instar larva it is expressed in the larval central nervous system including the brain and the ventral ganglion, in two glands (the ring gland and the salivary gland, and in parts of the foregut) the gastric caeca and the proventriculus.

Its subcellular location is the cytoplasm. The protein localises to the cell cortex. In terms of biological role, a NHL-domain family protein that functions as a translational repressor to inhibit cell proliferation. Plays a central role in translation repression of hb mRNA by being recruited by nanos (nos) and pum to the Nanos Response Element (NRE), a 16 bp sequence in the hb mRNA 3'-UTR. Probably recruited by other proteins to repress translation of other mRNAs in other tissues. Negatively regulates expression of Myc in a 3'-UTR dependent manner in both neural progenitor and epithelial cells. Regulates expression of mei-P26, possibly at transcriptional level. Involved in the regulation of ribosomal RNA synthesis and cell growth. Participates in abdominal segmentation and imaginal disk development. During neuroblast division, segregates asymmetrically and inhibits self-renewal of one of the two daughter cells. Together with the asymmetrically segregating transcription factor prospero ensures that the daughter cell will stop growing, exit the cell cycle, and differentiate into neurons possibly by modulating the function of dm in ganglion mother cells (GMC). Restricts developmental potential of type II intermediary neuronal progenitor (INP) cells playing a role in proliferation and maturation of the neuroblasts. This chain is Protein brain tumor, found in Drosophila melanogaster (Fruit fly).